A 349-amino-acid polypeptide reads, in one-letter code: Ferredoxin--NADP reductase 3 (349 aa).

Glutamate 34, lysine 42, tyrosine 46, valine 86, isoleucine 120, aspartate 287, and serine 328 together coordinate FAD.

This sequence belongs to the ferredoxin--NADP reductase type 2 family. As to quaternary structure, homodimer. Requires FAD as cofactor.

It carries out the reaction 2 reduced [2Fe-2S]-[ferredoxin] + NADP(+) + H(+) = 2 oxidized [2Fe-2S]-[ferredoxin] + NADPH. In Lysinibacillus sphaericus (strain C3-41), this protein is Ferredoxin--NADP reductase 3.